The chain runs to 200 residues: Cytochrome c biogenesis ATP-binding export protein CcmA (200 aa).

In terms of domain architecture, ABC transporter spans 2-200 (LDVIELDFDY…NKADYEEYHL (199 aa)). 34 to 41 (GSNGAGKT) contacts ATP.

Belongs to the ABC transporter superfamily. CcmA exporter (TC 3.A.1.107) family. The complex is composed of two ATP-binding proteins (CcmA) and two transmembrane proteins (CcmB).

It is found in the cell inner membrane. It carries out the reaction heme b(in) + ATP + H2O = heme b(out) + ADP + phosphate + H(+). Part of the ABC transporter complex CcmAB involved in the biogenesis of c-type cytochromes; once thought to export heme, this seems not to be the case, but its exact role is uncertain. Responsible for energy coupling to the transport system. This chain is Cytochrome c biogenesis ATP-binding export protein CcmA, found in Legionella pneumophila (strain Lens).